The following is a 470-amino-acid chain: Maltose fermentation regulatory protein YPR196W (470 aa).

A DNA-binding region (zn(2)-C6 fungal-type) is located at residues 8–34 (CDCCRVRRVKCDRNRPCDRCRQRNLRC). The short motif at 41-49 (RKRGPKSIG) is the Nuclear localization signal element.

The protein belongs to the MAL13 family.

The protein resides in the nucleus. May regulate the transcription of maltase and maltose permease genes. The sequence is that of Maltose fermentation regulatory protein YPR196W from Saccharomyces cerevisiae (strain ATCC 204508 / S288c) (Baker's yeast).